The chain runs to 520 residues: UDP-N-acetylmuramoyl-L-alanyl-D-glutamate--2,6-diaminopimelate ligase (520 aa).

Position 48 (leucine 48) interacts with UDP-N-acetyl-alpha-D-muramoyl-L-alanyl-D-glutamate. ATP is bound at residue 134–140; the sequence is GTSGKTT. Residues 176 to 177, serine 203, and arginine 211 contribute to the UDP-N-acetyl-alpha-D-muramoyl-L-alanyl-D-glutamate site; that span reads TT. The residue at position 243 (lysine 243) is an N6-carboxylysine. Meso-2,6-diaminopimelate contacts are provided by residues arginine 405, 429-432, glycine 483, and glutamate 487; that span reads DNPR. The Meso-diaminopimelate recognition motif motif lies at 429–432; the sequence is DNPR.

Belongs to the MurCDEF family. MurE subfamily. Mg(2+) is required as a cofactor. Carboxylation is probably crucial for Mg(2+) binding and, consequently, for the gamma-phosphate positioning of ATP.

It is found in the cytoplasm. The catalysed reaction is UDP-N-acetyl-alpha-D-muramoyl-L-alanyl-D-glutamate + meso-2,6-diaminopimelate + ATP = UDP-N-acetyl-alpha-D-muramoyl-L-alanyl-gamma-D-glutamyl-meso-2,6-diaminopimelate + ADP + phosphate + H(+). It functions in the pathway cell wall biogenesis; peptidoglycan biosynthesis. In terms of biological role, catalyzes the addition of meso-diaminopimelic acid to the nucleotide precursor UDP-N-acetylmuramoyl-L-alanyl-D-glutamate (UMAG) in the biosynthesis of bacterial cell-wall peptidoglycan. This chain is UDP-N-acetylmuramoyl-L-alanyl-D-glutamate--2,6-diaminopimelate ligase, found in Mycobacterium avium (strain 104).